The sequence spans 426 residues: Transcription termination factor Rho (426 aa).

The 74-residue stretch at Gln58 to Asp131 folds into the Rho RNA-BD domain. Residues Gly176–Ala181, Lys188–Thr193, and Arg219 contribute to the ATP site.

This sequence belongs to the Rho family. Homohexamer. The homohexamer assembles into an open ring structure.

Facilitates transcription termination by a mechanism that involves Rho binding to the nascent RNA, activation of Rho's RNA-dependent ATPase activity, and release of the mRNA from the DNA template. In Deinococcus radiodurans (strain ATCC 13939 / DSM 20539 / JCM 16871 / CCUG 27074 / LMG 4051 / NBRC 15346 / NCIMB 9279 / VKM B-1422 / R1), this protein is Transcription termination factor Rho.